The following is a 132-amino-acid chain: Small ribosomal subunit protein uS8 (132 aa).

It belongs to the universal ribosomal protein uS8 family. In terms of assembly, part of the 30S ribosomal subunit. Contacts proteins S5 and S12.

One of the primary rRNA binding proteins, it binds directly to 16S rRNA central domain where it helps coordinate assembly of the platform of the 30S subunit. This chain is Small ribosomal subunit protein uS8, found in Christiangramia forsetii (strain DSM 17595 / CGMCC 1.15422 / KT0803) (Gramella forsetii).